A 750-amino-acid chain; its full sequence is NAD(P)H-quinone oxidoreductase subunit 5, chloroplastic (750 aa).

16 consecutive transmembrane segments (helical) span residues Trp-9 to Phe-29, Trp-40 to Ile-60, Ile-89 to Ile-109, Phe-125 to Ile-145, Ile-147 to Thr-167, Gly-185 to Phe-205, Ala-230 to Leu-250, Thr-258 to Ala-278, Leu-283 to Leu-303, Leu-327 to Ile-347, Ala-354 to Ser-374, Thr-396 to Ser-416, Trp-425 to Tyr-445, Leu-548 to Phe-568, Ile-607 to Ile-627, and Leu-724 to Phe-744.

Belongs to the complex I subunit 5 family. NDH is composed of at least 16 different subunits, 5 of which are encoded in the nucleus.

It is found in the plastid. The protein resides in the chloroplast thylakoid membrane. The enzyme catalyses a plastoquinone + NADH + (n+1) H(+)(in) = a plastoquinol + NAD(+) + n H(+)(out). The catalysed reaction is a plastoquinone + NADPH + (n+1) H(+)(in) = a plastoquinol + NADP(+) + n H(+)(out). Functionally, NDH shuttles electrons from NAD(P)H:plastoquinone, via FMN and iron-sulfur (Fe-S) centers, to quinones in the photosynthetic chain and possibly in a chloroplast respiratory chain. The immediate electron acceptor for the enzyme in this species is believed to be plastoquinone. Couples the redox reaction to proton translocation, and thus conserves the redox energy in a proton gradient. The chain is NAD(P)H-quinone oxidoreductase subunit 5, chloroplastic (ndhF) from Tecoma stans (Yellow bells).